A 622-amino-acid chain; its full sequence is MFSHYRYKENSCQKREAIPDKSRVSLTFLQKRTDSSNVTVAVAVAVPIGAIIIVLSVVLIVVYRRCKKEPSMQDFDPNFEGDLYYLPKMDSSMNSANSDSNATEKRFIYGGYDDFLQPSIENSQSFKDYVRRINEHAPSAYNIASLASQNNSKLSVPSKHIDLSNKISFESLENSELIVSPQHSNTGQDCDQRCDSTSNPDVNEKSSHNNDNRLKSNYTSRSGLEPQCSREEEENIDRIRSIYNIYFEKSNSTIRSSVTSSIRRDSKLNIATRKSVNMSSQDNPNDTTLIEQSHFGSTTVQEIDSSSSANEEYEDATDYLQVPAPQENKNIASSVYSEVATREKVIPESSLSLTFPPPNGLSTRITSSIYSDTVAKDHIHSAKAPVRALSEGSGQSNLTSAQQYSTYFIDHCNQSNDDNYYYNYPLPLEHPQNYENIGDLPTPTQFIYSTSSHSLTSFKGRPKPPKTLKHVPTARLNGTALNPMDHPEMFYSSPTKIPSTSLTKQFCTPLPYQLRQSVVMTNPSELSMKPRYKPAGSLRNLIKAQYLPGNSSTTTSSSLSQPPSTLSNAINFRVSGLLDDTDILQPPSVGEILPFKASTEDLRKQLGTSHNYEITPYENVHV.

A helical membrane pass occupies residues 42 to 62 (VAVAVPIGAIIIVLSVVLIVV). Residues 181 to 201 (PQHSNTGQDCDQRCDSTSNPD) show a composition bias toward polar residues. The interval 181 to 233 (PQHSNTGQDCDQRCDSTSNPDVNEKSSHNNDNRLKSNYTSRSGLEPQCSREEE) is disordered. Residues 202-214 (VNEKSSHNNDNRL) show a composition bias toward basic and acidic residues.

This sequence belongs to the SKG6/TOS2 family. Phosphorylated by CDC28.

The protein localises to the cell membrane. It is found in the bud membrane. Functionally, seems to be involved in the anchoring of CDC24 to the membrane of polarized growth sites. This is Protein TOS2 (TOS2) from Saccharomyces cerevisiae (strain ATCC 204508 / S288c) (Baker's yeast).